Consider the following 790-residue polypeptide: LMBR1 domain-containing protein 2 homolog B (790 aa).

The segment covering 1 to 21 (MSSNTTTPTPTSTPTPTSSPS) has biased composition (low complexity). Residues 1 to 22 (MSSNTTTPTPTSTPTPTSSPSI) form a disordered region. The next 5 membrane-spanning stretches (helical) occupy residues 34–54 (FGNL…VLIG), 66–86 (IYAT…AYLV), 128–148 (FLYF…QSFS), 167–187 (VILY…ILSV), and 195–215 (FLSF…TITM). Residues 236–266 (LRNYRVEAVVLKTELEDVKRQLIDHLKLIKT) are a coiled coil. 3 helical membrane-spanning segments follow: residues 401-421 (FIIA…SEIV), 442-462 (PGIG…VCSY), and 539-559 (FTLF…FNLH). Disordered stretches follow at residues 630–665 (SQLD…PKLS), 701–751 (LGEK…TKDK), and 765–790 (SFQD…KNKK). The segment covering 644–665 (IDSSNRYKPTPTKTSINIPKLS) has biased composition (polar residues). Positions 706 to 734 (NASNNNNNNNNNNNNNNSNNKNSNNNNNS) are enriched in low complexity. Over residues 735 to 746 (ILTSNYESYSTP) the composition is skewed to polar residues. The span at 766-778 (FQDDDDHTFDDIE) shows a compositional bias: acidic residues.

Belongs to the LIMR family.

The protein localises to the membrane. The protein is LMBR1 domain-containing protein 2 homolog B of Dictyostelium discoideum (Social amoeba).